The chain runs to 931 residues: Myocardin-related transcription factor A (931 aa).

The tract at residues 1–256 (MPPLKSPAAF…KQDRGAPPMD (256 aa)) is mediates interaction with SCAI and ACTB. Residue S6 is modified to Phosphoserine. The tract at residues 6 to 23 (SPAAFHEQRRSLERARTE) is intervening spacer sequence 1. The stretch at 24–49 (DYLKRKIRSRPERSELVRMHILEETS) is one RPEL 1 repeat. Positions 27 to 65 (KRKIRSRPERSELVRMHILEETSAEPSLQAKQLKLKRAR) match the Bipartite Nuclear localization signal motif. Residues 50–67 (AEPSLQAKQLKLKRARLA) are intervening spacer sequence 2. Residues 68-93 (DDLNEKIAQRPGPMELVEKNILPVES) form an RPEL 2 repeat. Disordered stretches follow at residues 110–256 (ADSS…PPMD) and 290–344 (PAPP…GALP). Residues S124, S139, and S156 each carry the phosphoserine modification. Residues 151-162 (SATSASPTQVVS) show a composition bias toward polar residues. A compositionally biased stretch (pro residues) spans 180–189 (PPLPPPPLLP). A compositionally biased stretch (polar residues) spans 191–215 (SLTNGTTIPTAKSTPTLIKQSQPKS). A compositionally biased stretch (basic and acidic residues) spans 216–231 (ASEKSQRSKKAKELKP). Phosphothreonine is present on T305. 2 positions are modified to phosphoserine: S310 and S312. A compositionally biased stretch (low complexity) spans 310 to 320 (SLSTTNSSSSS). Position 313 is a phosphothreonine (T313). Residues S317, S320, and S333 each carry the phosphoserine modification. An SAP domain is found at 347-381 (LDDMKVAELKQELKLRSLPVSGTKTELIERLRAYQ). A phosphoserine mark is found at S385 and S446. Positions 444–476 (FGSTGSTPPVSPTPSERSLLSTGDENSTPGDTF) are disordered. T447 carries the phosphothreonine modification. Position 449 is a phosphoserine (S449). Residue T450 is modified to Phosphothreonine. The residue at position 454 (S454) is a Phosphoserine. Position 456 is a phosphothreonine (T456). S458 carries the post-translational modification Phosphoserine. The span at 459–473 (ERSLLSTGDENSTPG) shows a compositional bias: polar residues. Residues S482, S492, S507, and S511 each carry the phosphoserine modification. A coiled-coil region spans residues 515 to 563 (RAELEGRDKDQMLQEKDKQIEALTRMLRQKQQLVERLKLQLEQEKRAQQ). 3 disordered regions span residues 558-577 (EKRA…PVKQ), 674-746 (KNAD…SSSQ), and 763-816 (ADFK…RLED). The segment covering 678-694 (SPGLSSGSPQQPSSQPG) has biased composition (low complexity). Phosphoserine is present on residues S685, S691, and S695. Positions 732-746 (MSQQPKQQENGSSSQ) are enriched in polar residues. A compositionally biased stretch (basic and acidic residues) spans 763–778 (ADFKEPPSLPGKEKPS). Low complexity predominate over residues 784-799 (GSPLAAQPSPSAELPQ). 3 positions are modified to phosphoserine: S792, S807, and S859.

Interacts with SRF, forming the SRF-MRTFA nuclear complex which binds the 5'-CArG-3' consensus motif (CArG box) on DNA via SRF. Interacts (via RPEL repeats) with globular actin (G-actin), thereby regulating its subcellular location and activity of the complex formed with SRF. Either forms a trivalent (by binding three G-actin monomers) or pentavalent (by binding five G-actin monomers) complex with G-actin. Forms a nuclear ternary complex with SCAI and SRF, leading to suppress MRTFA-induced SRF transcriptional activity. Interacts with beta-actin (ACTB); interaction with ACTB prevents interaction with SCAI. Interacts with MRTFB. Post-translationally, phosphorylation at Ser-6 by Erk inhibits binding of globular actin (G-actin), unmasking the nuclear localization signal (NLS) and promoting nuclear import. As to expression, ubiquitously expressed, has been detected in lung, placenta, small intestine, liver, kidney, spleen, thymus, colon, muscle, heart and brain. Expressed in peripheral blood mononuclear cells (at protein level).

The protein resides in the cytoplasm. The protein localises to the nucleus. Functionally, transcription coactivator that associates with the serum response factor (SRF) transcription factor to control expression of genes regulating the cytoskeleton during development, morphogenesis and cell migration. The SRF-MRTFA complex activity responds to Rho GTPase-induced changes in cellular globular actin (G-actin) concentration, thereby coupling cytoskeletal gene expression to cytoskeletal dynamics. MRTFA binds G-actin via its RPEL repeats, regulating activity of the MRTFA-SRF complex. Activity is also regulated by filamentous actin (F-actin) in the nucleus. This Homo sapiens (Human) protein is Myocardin-related transcription factor A.